Consider the following 288-residue polypeptide: Male determiner protein Nix (288 aa).

RRM domains are found at residues 19–94 (YCIY…LPLS), 108–179 (IVVY…KVER), and 205–282 (RSIG…FVPE).

In terms of biological role, male determiner protein (M-factor) that controls male somatic sexual differentiation. Acts as a dominant factor that regulates the mRNA splicing of doublesex (dsx) or fruitless (fru) transcripts and promotes expression of male splice forms of dsx and fru. This chain is Male determiner protein Nix, found in Aedes aegypti (Yellowfever mosquito).